The following is a 60-amino-acid chain: Arabinogalactan protein 14 (60 aa).

The first 28 residues, 1-28 (MEAMKMKLYVVVLVAVIAFSTVHQTVAA), serve as a signal peptide directing secretion. 3 positions are modified to 4-hydroxyproline: Pro-32, Pro-34, and Pro-36. 3 O-linked (Ara...) hydroxyproline glycosylation sites follow: Pro-32, Pro-34, and Pro-36. Ser-38 is lipidated: GPI-anchor amidated serine. Residues 39–60 (DASSFIPTFFASVAVMAFGFFF) constitute a propeptide, removed in mature form.

Belongs to the AG-peptide AGP family. Contains 4-hydroxyproline; hydroxylated on Pro-32, Pro-34 and Pro-36. In terms of processing, O-glycosylated on hydroxyprolines; noncontiguous hydroxylproline residues are glycosylated with arabinogalactan.

It localises to the cell membrane. Its function is as follows. Proteoglycan that seems to be implicated in diverse developmental roles such as differentiation, cell-cell recognition, embryogenesis and programmed cell death. Involved in the regulation of root hair elongation. In Arabidopsis thaliana (Mouse-ear cress), this protein is Arabinogalactan protein 14.